We begin with the raw amino-acid sequence, 653 residues long: Acetyl-coenzyme A synthetase (653 aa).

Residues 195-198 (RGGK) and threonine 314 contribute to the CoA site. ATP contacts are provided by residues 390-392 (GEP), 414-419 (DTWWQT), aspartate 505, and arginine 520. Serine 528 is a CoA binding site. Arginine 531 is an ATP binding site. The Mg(2+) site is built by valine 542 and valine 547. Lysine 617 is subject to N6-acetyllysine.

It belongs to the ATP-dependent AMP-binding enzyme family. The cofactor is Mg(2+). In terms of processing, acetylated. Deacetylation by the SIR2-homolog deacetylase activates the enzyme.

The catalysed reaction is acetate + ATP + CoA = acetyl-CoA + AMP + diphosphate. Functionally, catalyzes the conversion of acetate into acetyl-CoA (AcCoA), an essential intermediate at the junction of anabolic and catabolic pathways. AcsA undergoes a two-step reaction. In the first half reaction, AcsA combines acetate with ATP to form acetyl-adenylate (AcAMP) intermediate. In the second half reaction, it can then transfer the acetyl group from AcAMP to the sulfhydryl group of CoA, forming the product AcCoA. This chain is Acetyl-coenzyme A synthetase, found in Pasteurella multocida (strain Pm70).